Here is a 989-residue protein sequence, read N- to C-terminus: DNA-binding protein SMUBP-2 (989 aa).

Position 2 is an N-acetylalanine (Ala2). Residues 213–220 (GPPGTGKT), Gln402, Tyr441, and Glu570 each bind ATP. An SS DNA-binding region spans residues 637-783 (TAFEYLDDIV…KARHITVSRK (147 aa)). Disordered stretches follow at residues 650-717 (YTHE…GCDR), 765-818 (LRHD…GQPH), and 833-869 (LQRQ…TKGP). The span at 677–690 (EQENGQEARAAAGQ) shows a compositional bias: low complexity. In terms of domain architecture, R3H spans 721 to 784 (IDRTEHFRAM…ARHITVSRKS (64 aa)). The segment covering 765-775 (LRHDSTGEGKA) has biased composition (basic and acidic residues). Residues Ser797 and Ser800 each carry the phosphoserine modification. Residues 833 to 842 (LQRQQGSQAQ) are compositionally biased toward low complexity. A Nuclear localization signal motif is present at residues 860 to 864 (KKKKK). The segment at 885–934 (IKADNTCSFAKCTASTTTLGQFCMHCSRRYCLSHHLPEIHGCGEKARAHA) adopts an AN1-type zinc-finger fold. Residues Cys891, Cys896, Cys907, Cys910, Cys915, His918, His924, and Cys926 each coordinate Zn(2+). A compositionally biased stretch (basic and acidic residues) spans 954 to 972 (ALDPAKRAQLQRRLDKKLG). The tract at residues 954–989 (ALDPAKRAQLQRRLDKKLGELSSQRTSKRKEKERGT) is disordered.

It belongs to the DNA2/NAM7 helicase family. As to quaternary structure, homooligomer. Interacts with RUVBL1. Interacts with RUVBL2. Interacts with GTF3C1. Interacts with ABT1. Interacts with ribosomes. As to expression, high expression in brain and testis, moderate in heart, spleen, and kidney, and low in other tissues.

It localises to the nucleus. It is found in the cytoplasm. The protein resides in the cell projection. The protein localises to the axon. It carries out the reaction ATP + H2O = ADP + phosphate + H(+). Functionally, 5' to 3' helicase that unwinds RNA and DNA duplexes in an ATP-dependent reaction. Specific to 5'-phosphorylated single-stranded guanine-rich sequences. May play a role in RNA metabolism, ribosome biogenesis or initiation of translation. May play a role in regulation of transcription. Interacts with tRNA-Tyr. The sequence is that of DNA-binding protein SMUBP-2 (IGHMBP2) from Mesocricetus auratus (Golden hamster).